We begin with the raw amino-acid sequence, 201 residues long: uncharacterized protein (201 aa).

A signal peptide spans 1–25 (MYRAGVTLLVVAVVSLGRWDVVTMA). Residues 26–170 (AAIGIGWYEP…AYFRRSNHRA (145 aa)) lie on the Extracellular side of the membrane. N-linked (GlcNAc...) asparagine; by host glycans are attached at residues asparagine 46, asparagine 49, asparagine 55, asparagine 84, asparagine 95, asparagine 113, asparagine 122, asparagine 137, and asparagine 144. The chain crosses the membrane as a helical span at residues 171-191 (FMIVILTQVVFVVFIINASFI). Over 192 to 201 (WSWTFRRHKR) the chain is Cytoplasmic.

This sequence belongs to the HHV-5 UL120 protein family.

Its subcellular location is the host membrane. This is an uncharacterized protein from Homo sapiens (Human).